A 64-amino-acid polypeptide reads, in one-letter code: MSDLFRMEERRQMPILPTEPARKEGDGGGPQKPDVKRPDTSDLLRRMKRVDPDAARRYRQRSGE.

Composition is skewed to basic and acidic residues over residues 1–12 and 33–64; these read MSDLFRMEERRQ and PDVK…RSGE. A disordered region spans residues 1 to 64; the sequence is MSDLFRMEER…ARRYRQRSGE (64 aa). Glu-64 participates in a covalent cross-link: Isoglutamyl lysine isopeptide (Glu-Lys) (interchain with K-? in acceptor proteins).

Belongs to the ubiquitin-like protein UBact family.

May function as a protein modifier covalently attached to lysine residues of substrate proteins. This may serve to target the modified proteins for degradation by proteasomes. The chain is Prokaryotic ubiquitin-like protein UBact from Chthonomonas calidirosea (strain DSM 23976 / ICMP 18418 / T49).